The sequence spans 323 residues: Fructose-1,6-bisphosphatase class 1 (323 aa).

Mg(2+) contacts are provided by Glu-84, Asp-103, Leu-105, and Asp-106. Substrate contacts are provided by residues 106–109 (DGSS), Asn-198, and Lys-264. Glu-270 contacts Mg(2+).

The protein belongs to the FBPase class 1 family. In terms of assembly, homotetramer. Mg(2+) is required as a cofactor.

It is found in the cytoplasm. The enzyme catalyses beta-D-fructose 1,6-bisphosphate + H2O = beta-D-fructose 6-phosphate + phosphate. It functions in the pathway carbohydrate biosynthesis; gluconeogenesis. The chain is Fructose-1,6-bisphosphatase class 1 from Pseudoalteromonas atlantica (strain T6c / ATCC BAA-1087).